A 221-amino-acid polypeptide reads, in one-letter code: Crossover junction endodeoxyribonuclease RuvC (221 aa).

Catalysis depends on residues Asp12, Glu73, and Asp146. Mg(2+) contacts are provided by Asp12, Glu73, and Asp146. The tract at residues 169–221 is disordered; sequence SQYSEQELEKRRRVQQGKLGKAKSTYNAEQAQSHASDPAKAAHPSQFQRTDTN. Polar residues predominate over residues 192–203; it reads STYNAEQAQSHA.

This sequence belongs to the RuvC family. In terms of assembly, homodimer which binds Holliday junction (HJ) DNA. The HJ becomes 2-fold symmetrical on binding to RuvC with unstacked arms; it has a different conformation from HJ DNA in complex with RuvA. In the full resolvosome a probable DNA-RuvA(4)-RuvB(12)-RuvC(2) complex forms which resolves the HJ. It depends on Mg(2+) as a cofactor.

Its subcellular location is the cytoplasm. The catalysed reaction is Endonucleolytic cleavage at a junction such as a reciprocal single-stranded crossover between two homologous DNA duplexes (Holliday junction).. Functionally, the RuvA-RuvB-RuvC complex processes Holliday junction (HJ) DNA during genetic recombination and DNA repair. Endonuclease that resolves HJ intermediates. Cleaves cruciform DNA by making single-stranded nicks across the HJ at symmetrical positions within the homologous arms, yielding a 5'-phosphate and a 3'-hydroxyl group; requires a central core of homology in the junction. The consensus cleavage sequence is 5'-(A/T)TT(C/G)-3'. Cleavage occurs on the 3'-side of the TT dinucleotide at the point of strand exchange. HJ branch migration catalyzed by RuvA-RuvB allows RuvC to scan DNA until it finds its consensus sequence, where it cleaves and resolves the cruciform DNA. The polypeptide is Crossover junction endodeoxyribonuclease RuvC (Corynebacterium glutamicum (strain ATCC 13032 / DSM 20300 / JCM 1318 / BCRC 11384 / CCUG 27702 / LMG 3730 / NBRC 12168 / NCIMB 10025 / NRRL B-2784 / 534)).